The primary structure comprises 280 residues: uncharacterized protein (280 aa).

2 disordered regions span residues Met1–Ala124 and Leu177–Lys280. 2 stretches are compositionally biased toward basic residues: residues Ser16 to Arg36 and Tyr48 to Ser83. Basic and acidic residues-rich tracts occupy residues Ala102–Ala124 and Glu182–Lys259.

This is an uncharacterized protein from Arabidopsis thaliana (Mouse-ear cress).